A 323-amino-acid polypeptide reads, in one-letter code: MKEIWLLAESESWDEAKEMLKDAIEIGFDGALVRRDFLERAEKLGRMKIVPIEDAVVKISSAEDQERALQREVVVLKFEDWKVIPLENIVAMKKSGKVIAAVDTIEDAKLALTTLERGADGIAVSGDRETLRKFYEVVKEEGERVELVRARVKEIRPLGVGERVCIDTVTLMTPGEGMLVGNQASFMFLVASESEESEYVASRPFRVNAGSVNAYLKVGDKTRYLAELKAGDEVEVVKFDGAVRKSYVGRVKIERRPLILIRAEVDGVEGSVILQNAETIKLVAPDGKHVSVAELKPGDEILVWLGKKARHFGVEVDEFIVER.

This sequence belongs to the archaeal-type DHQ synthase family.

It catalyses the reaction 2-amino-2,3,7-trideoxy-D-lyxo-hept-6-ulosonate + NAD(+) + H2O = 3-dehydroquinate + NH4(+) + NADH + H(+). Catalyzes the oxidative deamination and cyclization of 2-amino-3,7-dideoxy-D-threo-hept-6-ulosonic acid (ADH) to yield 3-dehydroquinate (DHQ), which is fed into the canonical shikimic pathway of aromatic amino acid biosynthesis. The polypeptide is 3-dehydroquinate synthase (Archaeoglobus fulgidus (strain ATCC 49558 / DSM 4304 / JCM 9628 / NBRC 100126 / VC-16)).